The chain runs to 344 residues: tRNA N6-adenosine threonylcarbamoyltransferase (344 aa).

2 residues coordinate Fe cation: H110 and H114. Substrate contacts are provided by residues 133 to 137 (VVSGA), D166, G179, and N278. D303 is a Fe cation binding site.

The protein belongs to the KAE1 / TsaD family. The cofactor is Fe(2+).

It localises to the cytoplasm. The catalysed reaction is L-threonylcarbamoyladenylate + adenosine(37) in tRNA = N(6)-L-threonylcarbamoyladenosine(37) in tRNA + AMP + H(+). Required for the formation of a threonylcarbamoyl group on adenosine at position 37 (t(6)A37) in tRNAs that read codons beginning with adenine. Is involved in the transfer of the threonylcarbamoyl moiety of threonylcarbamoyl-AMP (TC-AMP) to the N6 group of A37, together with TsaE and TsaB. TsaD likely plays a direct catalytic role in this reaction. The chain is tRNA N6-adenosine threonylcarbamoyltransferase from Chlamydia abortus (strain DSM 27085 / S26/3) (Chlamydophila abortus).